Reading from the N-terminus, the 178-residue chain is Ribonuclease M5 (178 aa).

In terms of domain architecture, Toprim spans 10 to 103 (DGVIVCEGKT…NSTKIGVAEA (94 aa)). Residues Glu-16, Asp-62, and Asp-64 each coordinate Mg(2+).

Belongs to the ribonuclease M5 family. The cofactor is Mg(2+).

It is found in the cytoplasm. The catalysed reaction is Endonucleolytic cleavage of RNA, removing 21 and 42 nucleotides, respectively, from the 5'- and 3'-termini of a 5S-rRNA precursor.. In terms of biological role, required for correct processing of both the 5' and 3' ends of 5S rRNA precursor. Cleaves both sides of a double-stranded region yielding mature 5S rRNA in one step. The sequence is that of Ribonuclease M5 from Mycoplasma pneumoniae (strain ATCC 29342 / M129 / Subtype 1) (Mycoplasmoides pneumoniae).